The following is a 298-amino-acid chain: uncharacterized protein (298 aa).

Positions 1–61 (MDIFISKKMR…TRKDNNISLN (61 aa)) constitute an HTH lysR-type domain. The segment at residues 21-40 (IARAAEKIHMTASPFGKSIA) is a DNA-binding region (H-T-H motif).

The protein belongs to the LysR transcriptional regulatory family.

This is an uncharacterized protein from Escherichia coli (strain K12).